The following is a 362-amino-acid chain: MSATRRIVLGLIPADGIGKEVVPAARRLMENLPAKHKLKFDFIDLDAGWGTFERTGKALPERTVERLKTECNAALFGAVQSPTHKVAGYSSPIVALRKKMGLYANVRPVKSLDGAKGKPVDLVIVRENTECLYVKEERMVQNTPGKRVAEAIRRISEEASTKIGKMAFEIAKSRQKIRESGTYSIHKKPLVTIIHKSNVMSVTDGLFRESCRHAQSLDPSYASINVDEQIVDSMVYRLFREPECFDVVVAPNLYGDILSDGAASLIGSLGLVPSANVGDNFVMSEPVHGSAPDIAGRGIANPVATFRSVALMLEFMGHQDAAADIYTAVDKVLTEGKVLTPDLGGKSGTNEITDAVLANIHN.

79–81 lines the NADH pocket; the sequence is VQS. S81 is a binding site for (2R,3S)-homoisocitrate. Residues S81 and S91 each carry the phosphoserine modification. Positions 97, 107, 126, 133, 196, and 198 each coordinate (2R,3S)-homoisocitrate. N198 is a binding site for NADH. Mg(2+) contacts are provided by D232, D256, and D260. Residues 289–293 and N301 each bind NADH; that span reads GSAPD.

It belongs to the isocitrate and isopropylmalate dehydrogenases family. Requires Mg(2+) as cofactor.

Its subcellular location is the cytoplasm. The catalysed reaction is (2R,3S)-homoisocitrate + NAD(+) = 2-oxoadipate + CO2 + NADH. It participates in amino-acid biosynthesis; L-lysine biosynthesis via AAA pathway; L-alpha-aminoadipate from 2-oxoglutarate: step 4/5. The chain is Homoisocitrate dehydrogenase (lys12) from Schizosaccharomyces pombe (strain 972 / ATCC 24843) (Fission yeast).